Consider the following 177-residue polypeptide: ATP synthase subunit delta (177 aa).

This sequence belongs to the ATPase delta chain family. As to quaternary structure, F-type ATPases have 2 components, F(1) - the catalytic core - and F(0) - the membrane proton channel. F(1) has five subunits: alpha(3), beta(3), gamma(1), delta(1), epsilon(1). F(0) has three main subunits: a(1), b(2) and c(10-14). The alpha and beta chains form an alternating ring which encloses part of the gamma chain. F(1) is attached to F(0) by a central stalk formed by the gamma and epsilon chains, while a peripheral stalk is formed by the delta and b chains.

It localises to the cell membrane. Functionally, f(1)F(0) ATP synthase produces ATP from ADP in the presence of a proton or sodium gradient. F-type ATPases consist of two structural domains, F(1) containing the extramembraneous catalytic core and F(0) containing the membrane proton channel, linked together by a central stalk and a peripheral stalk. During catalysis, ATP synthesis in the catalytic domain of F(1) is coupled via a rotary mechanism of the central stalk subunits to proton translocation. Its function is as follows. This protein is part of the stalk that links CF(0) to CF(1). It either transmits conformational changes from CF(0) to CF(1) or is implicated in proton conduction. This Macrococcus caseolyticus (strain JCSC5402) (Macrococcoides caseolyticum) protein is ATP synthase subunit delta.